Here is a 300-residue protein sequence, read N- to C-terminus: tRNA-cytidine(32) 2-sulfurtransferase (300 aa).

Positions 41–46 match the PP-loop motif motif; the sequence is SGGKDS. Positions 116, 119, and 207 each coordinate [4Fe-4S] cluster.

Belongs to the TtcA family. Homodimer. It depends on Mg(2+) as a cofactor. The cofactor is [4Fe-4S] cluster.

It localises to the cytoplasm. It catalyses the reaction cytidine(32) in tRNA + S-sulfanyl-L-cysteinyl-[cysteine desulfurase] + AH2 + ATP = 2-thiocytidine(32) in tRNA + L-cysteinyl-[cysteine desulfurase] + A + AMP + diphosphate + H(+). The protein operates within tRNA modification. Catalyzes the ATP-dependent 2-thiolation of cytidine in position 32 of tRNA, to form 2-thiocytidine (s(2)C32). The sulfur atoms are provided by the cysteine/cysteine desulfurase (IscS) system. In Idiomarina loihiensis (strain ATCC BAA-735 / DSM 15497 / L2-TR), this protein is tRNA-cytidine(32) 2-sulfurtransferase.